Consider the following 509-residue polypeptide: ATP synthase subunit alpha (509 aa).

169–176 (GDRQTGKT) contacts ATP.

It belongs to the ATPase alpha/beta chains family. In terms of assembly, F-type ATPases have 2 components, CF(1) - the catalytic core - and CF(0) - the membrane proton channel. CF(1) has five subunits: alpha(3), beta(3), gamma(1), delta(1), epsilon(1). CF(0) has three main subunits: a(1), b(2) and c(9-12). The alpha and beta chains form an alternating ring which encloses part of the gamma chain. CF(1) is attached to CF(0) by a central stalk formed by the gamma and epsilon chains, while a peripheral stalk is formed by the delta and b chains.

The protein localises to the cell inner membrane. It catalyses the reaction ATP + H2O + 4 H(+)(in) = ADP + phosphate + 5 H(+)(out). Produces ATP from ADP in the presence of a proton gradient across the membrane. The alpha chain is a regulatory subunit. This Zymomonas mobilis subsp. mobilis (strain ATCC 31821 / ZM4 / CP4) protein is ATP synthase subunit alpha.